The sequence spans 166 residues: Protein FAM163B (166 aa).

Residues 6 to 26 (VVITGGILATVILLCIIAVLC) form a helical membrane-spanning segment. Ser-40 bears the Phosphoserine mark.

The protein belongs to the FAM163 family.

The protein resides in the membrane. In Homo sapiens (Human), this protein is Protein FAM163B (FAM163B).